The following is a 294-amino-acid chain: Glycine--tRNA ligase alpha subunit (294 aa).

It belongs to the class-II aminoacyl-tRNA synthetase family. Tetramer of two alpha and two beta subunits.

It localises to the cytoplasm. The catalysed reaction is tRNA(Gly) + glycine + ATP = glycyl-tRNA(Gly) + AMP + diphosphate. This is Glycine--tRNA ligase alpha subunit from Nostoc sp. (strain PCC 7120 / SAG 25.82 / UTEX 2576).